The following is a 144-amino-acid chain: MNEELQQQYYQLEMYGQQVQKLQEELEKIELMKMELLKSIDSMEGLKDSEDILIPLGGGAFIKAKAMDTKKVIMGAGADVFLEKDISDVVVDFNKSIEDLDKAGSMIIAKIEETAKVAEQMQKDLEEKVQAMEGQMGGAPTLQM.

The protein belongs to the prefoldin alpha subunit family. Heterohexamer of two alpha and four beta subunits.

The protein resides in the cytoplasm. Molecular chaperone capable of stabilizing a range of proteins. Seems to fulfill an ATP-independent, HSP70-like function in archaeal de novo protein folding. The sequence is that of Prefoldin subunit alpha from Methanococcus aeolicus (strain ATCC BAA-1280 / DSM 17508 / OCM 812 / Nankai-3).